Consider the following 401-residue polypeptide: Tumor necrosis factor receptor superfamily member 11B (401 aa).

The signal sequence occupies residues 1-21; sequence MNKWLCCALLVLLDIIEWTTQ. 4 TNFR-Cys repeats span residues 24-62, 65-105, 107-142, and 145-185; these read LPPK…KTLC, CPDH…NRVC, CEEG…NTVC, and CPDG…DNVC. 8 disulfides stabilise this stretch: cysteine 41–cysteine 54, cysteine 44–cysteine 62, cysteine 65–cysteine 80, cysteine 83–cysteine 97, cysteine 87–cysteine 105, cysteine 107–cysteine 118, cysteine 124–cysteine 142, and cysteine 145–cysteine 160. N-linked (GlcNAc...) asparagine glycosylation occurs at asparagine 98. Residues asparagine 165 and asparagine 178 are each glycosylated (N-linked (GlcNAc...) asparagine). Cysteine 166 and cysteine 185 are disulfide-bonded. Death domains lie at 198–269 and 283–365; these read DVTL…MVKK and RHLG…THSL. An N-linked (GlcNAc...) asparagine glycan is attached at asparagine 289.

In terms of assembly, homodimer. Interacts with TNFSF10 and TNFSF11. As to expression, highly expressed in liver, lung, stomach, intestines and calvaria. Highly expressed in decidua and placenta, and in embryo.

Its subcellular location is the secreted. Acts as a decoy receptor for TNFSF11/RANKL and thereby neutralizes its function in osteoclastogenesis. Inhibits the activation of osteoclasts and promotes osteoclast apoptosis in vitro. Bone homeostasis seems to depend on the local ratio between TNFSF11 and TNFRSF11B. May also play a role in preventing arterial calcification. May act as decoy receptor for TNFSF10/TRAIL and protect against apoptosis. TNFSF10/TRAIL binding blocks the inhibition of osteoclastogenesis. This Mus musculus (Mouse) protein is Tumor necrosis factor receptor superfamily member 11B (Tnfrsf11b).